A 1402-amino-acid polypeptide reads, in one-letter code: Phospholipid-transporting ATPase dnf2 (1402 aa).

The next 4 helical transmembrane spans lie at 109-129 (FQNVANLFFLFLVILQSISIF), 135-155 (PGLAAVPLIVVVGITAVKDAI), 457-477 (LNFIILFSMCFVCAVVEGIAW), and 501-521 (VVTFFTGVILFQNLVPISLYI). The active-site 4-aspartylphosphate intermediate is the aspartate 569. 15 residues coordinate ATP: aspartate 569, lysine 570, threonine 571, glutamate 700, phenylalanine 741, serine 743, lysine 746, lysine 764, arginine 799, threonine 800, threonine 879, glycine 880, aspartate 881, arginine 986, and lysine 992. Aspartate 569 lines the Mg(2+) pocket. A Mg(2+)-binding site is contributed by threonine 571. Residue aspartate 1012 participates in Mg(2+) binding. Residues asparagine 1015 and aspartate 1016 each contribute to the ATP site. Residue aspartate 1016 participates in Mg(2+) binding. The next 6 membrane-spanning stretches (helical) occupy residues 1066–1086 (VAEMVNNFFYKSVVWTFTLFW), 1101–1121 (YTYVMLFNLIFSSLPVIVMGV), 1151–1171 (IFIGYMLDGFYQSVICFFFSF), 1193–1213 (LGVYVAAPTIMVVDTYVILNQ), 1218–1238 (VFSIGLWALSCLTFWFWTGVY), and 1260–1280 (FWAVLCGTIVSCLFPKFLFMT). Lysine 1275 is a binding site for a 1,2-diacyl-sn-glycero-3-phospho-L-serine.

It belongs to the cation transport ATPase (P-type) (TC 3.A.3) family. Type IV subfamily. It depends on Mg(2+) as a cofactor.

It is found in the cell membrane. The protein resides in the endoplasmic reticulum membrane. The catalysed reaction is ATP + H2O + phospholipidSide 1 = ADP + phosphate + phospholipidSide 2.. It catalyses the reaction a 1,2-diacyl-sn-glycero-3-phosphoethanolamine(out) + ATP + H2O = a 1,2-diacyl-sn-glycero-3-phosphoethanolamine(in) + ADP + phosphate + H(+). The enzyme catalyses a 1,2-diacyl-sn-glycero-3-phosphocholine(out) + ATP + H2O = a 1,2-diacyl-sn-glycero-3-phosphocholine(in) + ADP + phosphate + H(+). It carries out the reaction a beta-D-glucosyl-(1&lt;-&gt;1')-N-acylsphing-4-enine(out) + ATP + H2O = a beta-D-glucosyl-(1&lt;-&gt;1')-N-acylsphing-4-enine(in) + ADP + phosphate + H(+). The catalysed reaction is a 1,2-diacyl-sn-glycero-3-phospho-L-serine(out) + ATP + H2O = a 1,2-diacyl-sn-glycero-3-phospho-L-serine(in) + ADP + phosphate + H(+). In terms of biological role, catalytic component of a P4-ATPase flippase complex which catalyzes the hydrolysis of ATP coupled to the transport of glucosylceramide, phosphatidylcholine, phosphatidylethanolamine, and small amounts of phosphatidylserine from the lumenal to the cytosolic leaflet of the cell membrane and ensures the maintenance of asymmetric distribution of phospholipids. The polypeptide is Phospholipid-transporting ATPase dnf2 (Schizosaccharomyces pombe (strain 972 / ATCC 24843) (Fission yeast)).